Here is a 107-residue protein sequence, read N- to C-terminus: MAQNKLHVKKGDMVVVISGKDKGKKGKVLQAFPKEGKVIVEGVNIVTKHRKATSPQKPGGIIHQEAPIYSSKVMLYCENCGRGVRYGVKVLENGEKIRYCKRCNETL.

It belongs to the universal ribosomal protein uL24 family. Part of the 50S ribosomal subunit.

One of two assembly initiator proteins, it binds directly to the 5'-end of the 23S rRNA, where it nucleates assembly of the 50S subunit. Functionally, one of the proteins that surrounds the polypeptide exit tunnel on the outside of the subunit. The protein is Large ribosomal subunit protein uL24 of Thermoanaerobacter pseudethanolicus (strain ATCC 33223 / 39E) (Clostridium thermohydrosulfuricum).